Consider the following 163-residue polypeptide: Glutathione peroxidase 2 (163 aa).

Cys-36 is an active-site residue.

It belongs to the glutathione peroxidase family.

The protein resides in the cytoplasm. The catalysed reaction is 2 glutathione + H2O2 = glutathione disulfide + 2 H2O. Functionally, may constitute a glutathione peroxidase-like protective system against oxidative stresses. The chain is Glutathione peroxidase 2 (gpx-2) from Caenorhabditis elegans.